Reading from the N-terminus, the 874-residue chain is Alanine--tRNA ligase (874 aa).

His563, His567, Cys665, and His669 together coordinate Zn(2+).

This sequence belongs to the class-II aminoacyl-tRNA synthetase family. It depends on Zn(2+) as a cofactor.

It localises to the cytoplasm. The enzyme catalyses tRNA(Ala) + L-alanine + ATP = L-alanyl-tRNA(Ala) + AMP + diphosphate. Functionally, catalyzes the attachment of alanine to tRNA(Ala) in a two-step reaction: alanine is first activated by ATP to form Ala-AMP and then transferred to the acceptor end of tRNA(Ala). Also edits incorrectly charged Ser-tRNA(Ala) and Gly-tRNA(Ala) via its editing domain. The chain is Alanine--tRNA ligase from Haemophilus ducreyi (strain 35000HP / ATCC 700724).